We begin with the raw amino-acid sequence, 243 residues long: Uridylate kinase (243 aa).

Residue 15 to 18 (KLSG) participates in ATP binding. An involved in allosteric activation by GTP region spans residues 23-28 (GSEGFG). Gly57 is a binding site for UMP. Residues Gly58 and Arg62 each coordinate ATP. UMP-binding positions include Asp77 and 138-145 (TGNPFFTT). Thr165, Tyr171, and Asp174 together coordinate ATP.

This sequence belongs to the UMP kinase family. Homohexamer.

Its subcellular location is the cytoplasm. The catalysed reaction is UMP + ATP = UDP + ADP. It functions in the pathway pyrimidine metabolism; CTP biosynthesis via de novo pathway; UDP from UMP (UMPK route): step 1/1. With respect to regulation, allosterically activated by GTP. Inhibited by UTP. Functionally, catalyzes the reversible phosphorylation of UMP to UDP. This is Uridylate kinase from Vibrio cholerae serotype O1 (strain ATCC 39541 / Classical Ogawa 395 / O395).